The primary structure comprises 297 residues: Undecaprenyl-diphosphatase 3 (297 aa).

Transmembrane regions (helical) follow at residues 39-59 (PGAA…LIYF), 89-109 (WLVL…QDAI), 118-138 (LIAT…WYAS), 203-223 (FLLA…SIGG), 237-257 (PTIV…AWFL), and 268-288 (FVLY…GGAI).

Belongs to the UppP family.

It is found in the cell membrane. It carries out the reaction di-trans,octa-cis-undecaprenyl diphosphate + H2O = di-trans,octa-cis-undecaprenyl phosphate + phosphate + H(+). In terms of biological role, catalyzes the dephosphorylation of undecaprenyl diphosphate (UPP). Confers resistance to bacitracin. The polypeptide is Undecaprenyl-diphosphatase 3 (Frankia alni (strain DSM 45986 / CECT 9034 / ACN14a)).